Consider the following 340-residue polypeptide: Phosphate acyltransferase (340 aa).

Belongs to the PlsX family. As to quaternary structure, homodimer. Probably interacts with PlsY.

It localises to the cytoplasm. The enzyme catalyses a fatty acyl-[ACP] + phosphate = an acyl phosphate + holo-[ACP]. Its pathway is lipid metabolism; phospholipid metabolism. In terms of biological role, catalyzes the reversible formation of acyl-phosphate (acyl-PO(4)) from acyl-[acyl-carrier-protein] (acyl-ACP). This enzyme utilizes acyl-ACP as fatty acyl donor, but not acyl-CoA. The polypeptide is Phosphate acyltransferase (Pseudomonas syringae pv. tomato (strain ATCC BAA-871 / DC3000)).